Here is a 209-residue protein sequence, read N- to C-terminus: Octanoyltransferase (209 aa).

A BPL/LPL catalytic domain is found at 29–209; it reads GSGDELVWML…KKSFVKIFGE (181 aa). Residues 68-75, 141-143, and 154-156 contribute to the substrate site; these read RGGKYTYH, AIG, and GIA. Cysteine 172 serves as the catalytic Acyl-thioester intermediate.

It belongs to the LipB family.

The protein resides in the cytoplasm. It catalyses the reaction octanoyl-[ACP] + L-lysyl-[protein] = N(6)-octanoyl-L-lysyl-[protein] + holo-[ACP] + H(+). Its pathway is protein modification; protein lipoylation via endogenous pathway; protein N(6)-(lipoyl)lysine from octanoyl-[acyl-carrier-protein]: step 1/2. Catalyzes the transfer of endogenously produced octanoic acid from octanoyl-acyl-carrier-protein onto the lipoyl domains of lipoate-dependent enzymes. Lipoyl-ACP can also act as a substrate although octanoyl-ACP is likely to be the physiological substrate. The sequence is that of Octanoyltransferase from Neorickettsia sennetsu (strain ATCC VR-367 / Miyayama) (Ehrlichia sennetsu).